We begin with the raw amino-acid sequence, 456 residues long: Probable mannan endo-1,4-beta-mannosidase F (456 aa).

The signal sequence occupies residues 1–18; it reads MRPLSSAALLSAIGAVAA. The CBM1 domain occupies 19-54; it reads QVGPWGQCGGQSYTGGTSCVSGWACVFLNDWYSQCQ. A disordered region spans residues 79-110; sequence STSVSATAPPSSTSSSTASVSSSTSSTPIPTS. A ser-rich linker region spans residues 79-113; sequence STSVSATAPPSSTSSSTASVSSSTSSTPIPTSSGS. The interval 114–456 is catalytic; it reads FVKAEGLKFN…CAVIDHVSRI (343 aa). Residues Trp166 and Asn280 each coordinate substrate. Glu281 (proton donor) is an active-site residue. Substrate is bound at residue Tyr356. Catalysis depends on Glu390, which acts as the Nucleophile. Trp420 provides a ligand contact to substrate.

Belongs to the glycosyl hydrolase 5 (cellulase A) family.

The protein resides in the secreted. It catalyses the reaction Random hydrolysis of (1-&gt;4)-beta-D-mannosidic linkages in mannans, galactomannans and glucomannans.. Functionally, endo-1,4-mannanase, a crucial enzyme for depolymerization of seed galactomannans and wood galactoglucomannans. This is Probable mannan endo-1,4-beta-mannosidase F (manF) from Neosartorya fischeri (strain ATCC 1020 / DSM 3700 / CBS 544.65 / FGSC A1164 / JCM 1740 / NRRL 181 / WB 181) (Aspergillus fischerianus).